A 235-amino-acid chain; its full sequence is Ubiquinone/menaquinone biosynthesis C-methyltransferase UbiE (235 aa).

The S-adenosyl-L-methionine site is built by Thr59, Asp84, and Ser123.

This sequence belongs to the class I-like SAM-binding methyltransferase superfamily. MenG/UbiE family.

It carries out the reaction a 2-demethylmenaquinol + S-adenosyl-L-methionine = a menaquinol + S-adenosyl-L-homocysteine + H(+). It catalyses the reaction a 2-methoxy-6-(all-trans-polyprenyl)benzene-1,4-diol + S-adenosyl-L-methionine = a 5-methoxy-2-methyl-3-(all-trans-polyprenyl)benzene-1,4-diol + S-adenosyl-L-homocysteine + H(+). It functions in the pathway quinol/quinone metabolism; menaquinone biosynthesis; menaquinol from 1,4-dihydroxy-2-naphthoate: step 2/2. The protein operates within cofactor biosynthesis; ubiquinone biosynthesis. Its function is as follows. Methyltransferase required for the conversion of demethylmenaquinol (DMKH2) to menaquinol (MKH2) and the conversion of 2-polyprenyl-6-methoxy-1,4-benzoquinol (DDMQH2) to 2-polyprenyl-3-methyl-6-methoxy-1,4-benzoquinol (DMQH2). The polypeptide is Ubiquinone/menaquinone biosynthesis C-methyltransferase UbiE (Campylobacter jejuni subsp. jejuni serotype O:6 (strain 81116 / NCTC 11828)).